Here is a 436-residue protein sequence, read N- to C-terminus: Amino acid transporter AVT3C (436 aa).

The segment covering 1–13 has biased composition (polar residues); sequence MGFQNEASSSSYT. A disordered region spans residues 1-21; the sequence is MGFQNEASSSSYTLKIPPPAR. The Cytoplasmic segment spans residues 1-38; the sequence is MGFQNEASSSSYTLKIPPPAREDSPLLGKGPPLSSQFK. The chain crosses the membrane as a helical span at residues 39–59; that stretch reads TFANVFIAVVGAGVLGLPYAF. Over 60 to 65 the chain is Vacuolar; it reads KRTGWL. Residues 66 to 86 traverse the membrane as a helical segment; sequence MGVLLLVSVSVLTHHCMMLLV. Topologically, residues 87-118 are cytoplasmic; that stretch reads YTRRKLDSFNAGISKIGSFGDLGFAVCGSLGR. The chain crosses the membrane as a helical span at residues 119-139; sequence IVVDLFIILSQAGFCVGYLIF. Residues 140 to 166 are Vacuolar-facing; sequence IGTTLANLSDPESPTSLRHQFTRLGSE. Residues 167–187 form a helical membrane-spanning segment; that stretch reads FLGVSSKSLYIWGCFPFQLGL. Residues 188-195 are Cytoplasmic-facing; it reads NSIKTLTH. Residues 196–216 form a helical membrane-spanning segment; it reads LAPLSIFADIVDLGAMAVVIV. At 217–228 the chain is on the vacuolar side; that stretch reads EDSMIILKQRPD. Residues 229 to 249 form a helical membrane-spanning segment; sequence VVAFGGMSLFLYGMGVAVYSF. Residues 250 to 273 are Cytoplasmic-facing; that stretch reads EGVGMVLPLESEMKDKDKFGKVLA. A helical transmembrane segment spans residues 274 to 294; that stretch reads LGMGFISLIYIAFGILGYLAF. The Vacuolar segment spans residues 295–309; it reads GEDTMDIITANLGAG. Residues 310-330 traverse the membrane as a helical segment; it reads LVSTVVQLGLCINLFFTFPLM. The Cytoplasmic segment spans residues 331-352; that stretch reads MNPVFEIVERRFSRGMYSAWLR. A helical membrane pass occupies residues 353–373; that stretch reads WVLVLAVTLVALFVPNFADFL. Residues 374–376 are Vacuolar-facing; that stretch reads SLV. Residues 377-397 traverse the membrane as a helical segment; sequence GSSTCCVLGFVLPALFHLLVF. Residues 398–411 are Cytoplasmic-facing; that stretch reads KEEMGWLQWSSDTA. A helical membrane pass occupies residues 412–432; that stretch reads IVVLGVVLAVSGTWSSLSEIF. Residues 433–436 lie on the Vacuolar side of the membrane; the sequence is SVKV.

The protein belongs to the amino acid/polyamine transporter 2 family. Amino acid/auxin permease (AAAP) (TC 2.A.18.8) subfamily. In terms of tissue distribution, ubiquitous.

It localises to the vacuole membrane. In terms of biological role, translocates preferentially neutral amino acids from the vacuole to the cytoplasm. The sequence is that of Amino acid transporter AVT3C from Arabidopsis thaliana (Mouse-ear cress).